Consider the following 295-residue polypeptide: Shikimate dehydrogenase (NADP(+)) (295 aa).

Residues 21 to 23 (SLS) and Thr68 each bind shikimate. The active-site Proton acceptor is Lys72. Shikimate-binding residues include Asn93 and Asp108. Residues 132 to 136 (GAGGA), 156 to 161 (NRTPER), and Leu228 each bind NADP(+). A shikimate-binding site is contributed by Tyr230. Gly251 is an NADP(+) binding site.

It belongs to the shikimate dehydrogenase family. Homodimer.

It carries out the reaction shikimate + NADP(+) = 3-dehydroshikimate + NADPH + H(+). It functions in the pathway metabolic intermediate biosynthesis; chorismate biosynthesis; chorismate from D-erythrose 4-phosphate and phosphoenolpyruvate: step 4/7. Involved in the biosynthesis of the chorismate, which leads to the biosynthesis of aromatic amino acids. Catalyzes the reversible NADPH linked reduction of 3-dehydroshikimate (DHSA) to yield shikimate (SA). The protein is Shikimate dehydrogenase (NADP(+)) of Moorella thermoacetica (strain ATCC 39073 / JCM 9320).